The primary structure comprises 293 residues: ATP synthase gamma chain (293 aa).

Belongs to the ATPase gamma chain family. F-type ATPases have 2 components, CF(1) - the catalytic core - and CF(0) - the membrane proton channel. CF(1) has five subunits: alpha(3), beta(3), gamma(1), delta(1), epsilon(1). CF(0) has three main subunits: a, b and c.

It is found in the cell membrane. Functionally, produces ATP from ADP in the presence of a proton gradient across the membrane. The gamma chain is believed to be important in regulating ATPase activity and the flow of protons through the CF(0) complex. In Streptococcus agalactiae serotype III (strain NEM316), this protein is ATP synthase gamma chain.